Reading from the N-terminus, the 365-residue chain is MGELRRSPLHERHVELGAKTAAFGGWEMPIEYAGRGVLAEHAAVRGAVGIFDVSHLGKARVAGPGAAEFVNTCLTNDLRRVGPGQAQYTLCCDETGGVVDDLIAYYYAVDNVFLVPNAANTAEVVRRLAAQAPAGVAVTDLHTEFAVLAVQGPAAPEVLRKLGLPADGAYMSFADAEWKGRPVIVCRSGYTGEAGFELLPRWADAVPLWDELLTVVTGLGGLPCGLGARDTLRTEMGYPLHGQDLSLSISPVQARSGWAVGWDKPAFWGREALLAERAAGPARSLWGLRSNDRGIPRPHMRVSGPDGAELGEVTSGTFSPTLRQGIGLALLDRSVTAGDEVAVDVRGRVSTMTVVRPPFVSASPR.

This sequence belongs to the GcvT family. The glycine cleavage system is composed of four proteins: P, T, L and H.

The enzyme catalyses N(6)-[(R)-S(8)-aminomethyldihydrolipoyl]-L-lysyl-[protein] + (6S)-5,6,7,8-tetrahydrofolate = N(6)-[(R)-dihydrolipoyl]-L-lysyl-[protein] + (6R)-5,10-methylene-5,6,7,8-tetrahydrofolate + NH4(+). Functionally, the glycine cleavage system catalyzes the degradation of glycine. This Parafrankia sp. (strain EAN1pec) protein is Aminomethyltransferase.